Here is a 321-residue protein sequence, read N- to C-terminus: Phospho-N-acetylmuramoyl-pentapeptide-transferase (321 aa).

The next 10 membrane-spanning stretches (helical) occupy residues 1 to 21 (MIFI…PILI), 50 to 70 (MGGL…IIFV), 76 to 96 (IILL…DDYI), 112 to 132 (FLAQ…FHLV), 140 to 160 (IPFV…IVFW), 176 to 196 (GLAT…SYML), 200 to 220 (AIGI…PYNL), 225 to 245 (VFMG…ISIM), 250 to 270 (LSLI…MLQV), and 300 to 320 (VVTV…WIGV).

This sequence belongs to the glycosyltransferase 4 family. MraY subfamily. Mg(2+) serves as cofactor.

The protein resides in the cell membrane. It carries out the reaction UDP-N-acetyl-alpha-D-muramoyl-L-alanyl-gamma-D-glutamyl-L-lysyl-D-alanyl-D-alanine + di-trans,octa-cis-undecaprenyl phosphate = Mur2Ac(oyl-L-Ala-gamma-D-Glu-L-Lys-D-Ala-D-Ala)-di-trans,octa-cis-undecaprenyl diphosphate + UMP. The protein operates within cell wall biogenesis; peptidoglycan biosynthesis. Catalyzes the initial step of the lipid cycle reactions in the biosynthesis of the cell wall peptidoglycan: transfers peptidoglycan precursor phospho-MurNAc-pentapeptide from UDP-MurNAc-pentapeptide onto the lipid carrier undecaprenyl phosphate, yielding undecaprenyl-pyrophosphoryl-MurNAc-pentapeptide, known as lipid I. The chain is Phospho-N-acetylmuramoyl-pentapeptide-transferase from Staphylococcus epidermidis (strain ATCC 12228 / FDA PCI 1200).